The primary structure comprises 123 residues: UPF0102 protein CLJ_B2665 (123 aa).

Belongs to the UPF0102 family.

The sequence is that of UPF0102 protein CLJ_B2665 from Clostridium botulinum (strain 657 / Type Ba4).